The following is a 374-amino-acid chain: Chaperone protein DnaJ (374 aa).

One can recognise a J domain in the interval 6 to 71; it reads DYYAVLEVTR…QKRAAYDRFG (66 aa). The CR-type zinc finger occupies 130–209; it reads GVKKPITVPT…CHGAGTVERE (80 aa). Zn(2+) contacts are provided by Cys143, Cys146, Cys161, Cys164, Cys183, Cys186, Cys197, and Cys200. CXXCXGXG motif repeat units follow at residues 143–150, 161–168, 183–190, and 197–204; these read CESCEGTG, CPTCHGAG, and CAACHGAG.

Belongs to the DnaJ family. In terms of assembly, homodimer. It depends on Zn(2+) as a cofactor.

Its subcellular location is the cytoplasm. Participates actively in the response to hyperosmotic and heat shock by preventing the aggregation of stress-denatured proteins and by disaggregating proteins, also in an autonomous, DnaK-independent fashion. Unfolded proteins bind initially to DnaJ; upon interaction with the DnaJ-bound protein, DnaK hydrolyzes its bound ATP, resulting in the formation of a stable complex. GrpE releases ADP from DnaK; ATP binding to DnaK triggers the release of the substrate protein, thus completing the reaction cycle. Several rounds of ATP-dependent interactions between DnaJ, DnaK and GrpE are required for fully efficient folding. Also involved, together with DnaK and GrpE, in the DNA replication of plasmids through activation of initiation proteins. This chain is Chaperone protein DnaJ, found in Gluconacetobacter diazotrophicus (strain ATCC 49037 / DSM 5601 / CCUG 37298 / CIP 103539 / LMG 7603 / PAl5).